The sequence spans 572 residues: MDAQTWPVGFRCLLLLALVGSARSEGVQTCEEVRKLFQWRLLGAVRGLPDSPRAGPDLQVCISKKPTCCTRKMEERYQIAARQDMQQFLQTSSSTLKFLISRNAAAFQETLETLIKQAENYTSILFCSTYRNMALEAAASVQEFFTDVGLYLFGADVNPEEFVNRFFDSLFPLVYNHLINPGVTDSSLEYSECIRMARRDVSPFGNIPQRVMGQMGRSLLPSRTFLQALNLGIEVINTTDYLHFSKECSRALLKMQYCPHCQGLALTKPCMGYCLNVMRGCLAHMAELNPHWHAYIRSLEELSDAMHGTYDIGHVLLNFHLLVNDAVLQAHLNGQKLLEQVNRICGRPVRTPTQSPRCSFDQSKEKHGMKTTTRNSEETLANRRKEFINSLRLYRSFYGGLADQLCANELAAADGLPCWNGEDIVKSYTQRVVGNGIKAQSGNPEVKVKGIDPVINQIIDKLKHVVQLLQGRSPKPDKWELLQLGSGGGMVEQVSGDCDDEDGCGGSGSGEVKRTLKITDWMPDDMNFSDVKQIHQTDTGSTLDTTGAGCAVATESMTFTLISVVMLLPGIW.

The N-terminal stretch at 1–24 (MDAQTWPVGFRCLLLLALVGSARS) is a signal peptide. Residues Asn120 and Asn237 are each glycosylated (N-linked (GlcNAc...) asparagine). A disordered region spans residues 355 to 375 (SPRCSFDQSKEKHGMKTTTRN). Residues Ser441, Ser486, Ser495, Ser507, and Ser509 are each glycosylated (O-linked (Xyl...) (glycosaminoglycan) serine). N-linked (GlcNAc...) asparagine glycosylation is present at Asn527.

Belongs to the glypican family. As to expression, in adult, primarily expressed in the brain. Also detected in fetal brain, lung and liver.

It is found in the cell membrane. It localises to the secreted. Its subcellular location is the extracellular space. Functionally, cell surface proteoglycan that bears heparan sulfate. The protein is Glypican-5 (GPC5) of Homo sapiens (Human).